A 346-amino-acid polypeptide reads, in one-letter code: Uroporphyrinogen decarboxylase (346 aa).

Residues Arg26 to Arg30, Asp76, Tyr153, Ser208, and His323 each bind substrate.

The protein belongs to the uroporphyrinogen decarboxylase family. As to quaternary structure, homodimer.

It is found in the cytoplasm. The enzyme catalyses uroporphyrinogen III + 4 H(+) = coproporphyrinogen III + 4 CO2. Its pathway is porphyrin-containing compound metabolism; protoporphyrin-IX biosynthesis; coproporphyrinogen-III from 5-aminolevulinate: step 4/4. Catalyzes the decarboxylation of four acetate groups of uroporphyrinogen-III to yield coproporphyrinogen-III. The sequence is that of Uroporphyrinogen decarboxylase from Prochlorococcus marinus (strain MIT 9312).